A 485-amino-acid chain; its full sequence is Probable WRKY transcription factor 10 (485 aa).

2 disordered regions span residues 43–62 and 215–293; these read IFPQ…QRSG and ISIE…SKTQ. A compositionally biased stretch (acidic residues) spans 216–264; sequence SIEDSESEDGNKDDDDEDFQYEDEDEDQYDQDQDVDEDEEEEKDEDNVA. Positions 301-366 form a DNA-binding region, WRKY; it reads SDEDNPNDGY…YDGIHNHPSP (66 aa). Residues cysteine 332, cysteine 337, histidine 361, and histidine 363 each coordinate Zn(2+). Positions 358–417 are disordered; sequence DGIHNHPSPPARRSNSSSRNRSAGATIPQNQNDRTSRLGRAPPTPTPPTPPPSSYTPEEM. Low complexity predominate over residues 368–380; the sequence is ARRSNSSSRNRSA. A compositionally biased stretch (pro residues) spans 399-411; that stretch reads PPTPTPPTPPPSS.

It belongs to the WRKY group I family. As to quaternary structure, interacts with IKU1. Expressed in male gametophytes (pollen) and in the endosperm of fertilized ovules.

It is found in the nucleus. Transcription factor. Interacts specifically with the W box (5'-(T)TGAC[CT]-3'), a frequently occurring elicitor-responsive cis-acting element. Modulates seed size by negatively regulating the cellularization of syncytial endosperm. The chain is Probable WRKY transcription factor 10 (WRKY10) from Arabidopsis thaliana (Mouse-ear cress).